Consider the following 1043-residue polypeptide: Non-canonical nonribosomal peptide synthetase cpsA (1043 aa).

Residues 41–386 (RRAQENPSAP…IGGDGVSPGY (346 aa)) form an adenylation (A) domain region. The Carrier domain occupies 549–626 (QDASTTISRL…QMARYVDEGG (78 aa)). An O-(pantetheine 4'-phosphoryl)serine modification is found at Ser-586. The tract at residues 671-914 (MTGATGFVGA…FVPVDYLVDA (244 aa)) is short-chain dehydrogenase/reductase (R) domain. The region spanning 672–915 (TGATGFVGAF…VPVDYLVDAI (244 aa)) is the Thioester reductase (TE) domain.

Belongs to the NRP synthetase family. Pantetheine 4'-phosphate is required as a cofactor.

It carries out the reaction L-valine + ATP + NADPH + H(+) = L-valinal + AMP + diphosphate + NADP(+). The enzyme catalyses L-tryptophan + ATP + NADPH + H(+) = L-tryptophanal + AMP + diphosphate + NADP(+). Its pathway is alkaloid biosynthesis. In terms of biological role, non-canonical nonribosomal peptide synthetase; part of the gene cluster that mediates the biosynthesis of campesine G, a dimeric indole piperazine alkaloid that shows good insecticidal activity Galleria mellonella. CpsA catalyzes the first steps of the pathway by producing L-tryptophanal and L-valinal from their respective amino-acids. These products condensate spontaneously to form trypyl-valyl pyrazine also known as didehydrocampesine A. The NmrA-like family domain-containing oxidoreductase cpsB is the next enzyme in cps pathway and reduces the unstable didehydrocampesine A to campesine A. The methyltransferase cpsF and the acetyltransferase cpsE both recognize N13 of piperazine ring to carry out methylation and acetylation of campesine A to produce campesine C and B, respectively. The cytochrome P450 monooxygenase cpsD then acts as a dimerase that catalyzes oxidative heterocoupling between campesine B and C to produce heterodimers with unexpected 6/5/6/6/6/6/5/6 eight-ring scaffold called campesine D. Finally,the cytochrome P450 monooxygenase cpsC is a regioselective dehydrogenase that catalyzes dehydrogenation reaction towards C2-N1 to produce campesine G. This is Non-canonical nonribosomal peptide synthetase cpsA from Aspergillus campestris (strain IBT 28561).